The sequence spans 357 residues: Fructose-bisphosphate aldolase, cytoplasmic isozyme (357 aa).

Positions 53 and 142 each coordinate substrate. Catalysis depends on Glu-183, which acts as the Proton acceptor. Lys-225 acts as the Schiff-base intermediate with dihydroxyacetone-P in catalysis.

The protein belongs to the class I fructose-bisphosphate aldolase family.

It is found in the cytoplasm. The catalysed reaction is beta-D-fructose 1,6-bisphosphate = D-glyceraldehyde 3-phosphate + dihydroxyacetone phosphate. It participates in carbohydrate degradation; glycolysis; D-glyceraldehyde 3-phosphate and glycerone phosphate from D-glucose: step 4/4. The sequence is that of Fructose-bisphosphate aldolase, cytoplasmic isozyme from Spinacia oleracea (Spinach).